A 21-amino-acid chain; its full sequence is Trypsin (21 aa).

The protein belongs to the peptidase S1 family.

Its subcellular location is the secreted. The protein resides in the extracellular space. The catalysed reaction is Preferential cleavage: Arg-|-Xaa, Lys-|-Xaa.. In Apis mellifera scutellata (Africanized honey bee), this protein is Trypsin.